A 197-amino-acid chain; its full sequence is Phosphoheptose isomerase (197 aa).

One can recognise an SIS domain in the interval 36–197 (MVNALLNEGK…IDSQLFGSEE (162 aa)). 51-53 (NGG) serves as a coordination point for substrate. Residues His-60 and Glu-64 each coordinate Zn(2+). Residues Glu-64, 93–94 (ND), 119–121 (STS), Ser-124, and Gln-174 each bind substrate. 2 residues coordinate Zn(2+): Gln-174 and His-182.

Belongs to the SIS family. GmhA subfamily. As to quaternary structure, homotetramer. Requires Zn(2+) as cofactor.

Its subcellular location is the cytoplasm. The enzyme catalyses 2 D-sedoheptulose 7-phosphate = D-glycero-alpha-D-manno-heptose 7-phosphate + D-glycero-beta-D-manno-heptose 7-phosphate. It functions in the pathway carbohydrate biosynthesis; D-glycero-D-manno-heptose 7-phosphate biosynthesis; D-glycero-alpha-D-manno-heptose 7-phosphate and D-glycero-beta-D-manno-heptose 7-phosphate from sedoheptulose 7-phosphate: step 1/1. Functionally, catalyzes the isomerization of sedoheptulose 7-phosphate in D-glycero-D-manno-heptose 7-phosphate. In Pseudomonas fluorescens (strain SBW25), this protein is Phosphoheptose isomerase.